The primary structure comprises 824 residues: FT-interacting protein 1 (824 aa).

3 C2 domains span residues W48–Y170, V217–F341, and Y385–Y522. Transmembrane regions (helical) follow at residues A625 to W645, L657 to F677, and A764 to F784.

The protein belongs to the MCTP family. As to quaternary structure, interacts with RFT1 and PI4KG4. Specifically expressed in the phloem including companion cells.

The protein localises to the endoplasmic reticulum membrane. Its function is as follows. Involved in the export of the long day-specific flower-promoting signal (florigen) RFT1 from the phloem companion cells to sieve elements. Promotes flowering under long days through the transport of RFT1 from the leaves to the shoot apical meristem (SAM). This chain is FT-interacting protein 1, found in Oryza sativa subsp. japonica (Rice).